Consider the following 685-residue polypeptide: Iron(3+)-hydroxamate import system permease protein FhuB (685 aa).

18 helical membrane-spanning segments follow: residues 35–55, 87–107, 120–140, 143–163, 172–192, 222–242, 265–285, 302–322, 328–348, 373–393, 416–436, 456–476, 479–499, 504–524, 553–573, 592–612, 632–652, and 660–680; these read ALLL…NFSV, LAIS…FQQV, VATG…PGAL, QFAA…VAWG, ILAG…LVIF, QLLG…LMGL, AIVL…IGLF, LMLA…IILW, MEVS…LWLL, LAFA…ALSF, WPRI…GCII, AAFG…GWLL, GSLG…RGGF, MLLA…MLQA, AIVM…LTIL, IALL…IGPL, MPHM…ADWC, and YQIP…IYLL.

The protein belongs to the binding-protein-dependent transport system permease family. FecCD subfamily. The complex is composed of two ATP-binding proteins (FhuC), a transmembrane protein (FhuB) and a solute-binding protein (FhuD).

It is found in the cell inner membrane. Part of the ABC transporter complex FhuCDB involved in iron(3+)-hydroxamate import. Responsible for the translocation of the substrate across the membrane. Involved in ferrioxamine-mediated iron(III) utilization. The polypeptide is Iron(3+)-hydroxamate import system permease protein FhuB (fhuB) (Salmonella typhimurium (strain LT2 / SGSC1412 / ATCC 700720)).